The primary structure comprises 434 residues: ATP-dependent protease ATPase subunit HslU (434 aa).

Residues Ile-18, 60–65, Asp-247, Glu-312, and Arg-384 each bind ATP; that span reads GVGKTE.

The protein belongs to the ClpX chaperone family. HslU subfamily. A double ring-shaped homohexamer of HslV is capped on each side by a ring-shaped HslU homohexamer. The assembly of the HslU/HslV complex is dependent on binding of ATP.

It localises to the cytoplasm. ATPase subunit of a proteasome-like degradation complex; this subunit has chaperone activity. The binding of ATP and its subsequent hydrolysis by HslU are essential for unfolding of protein substrates subsequently hydrolyzed by HslV. HslU recognizes the N-terminal part of its protein substrates and unfolds these before they are guided to HslV for hydrolysis. In Brucella melitensis biotype 1 (strain ATCC 23456 / CCUG 17765 / NCTC 10094 / 16M), this protein is ATP-dependent protease ATPase subunit HslU.